The sequence spans 211 residues: Endonuclease Htp3 (211 aa).

The signal sequence occupies residues 1 to 20 (MLEVPVWIPILAFAVGLGLG). The RxLR signature appears at 48 to 51 (RTLR). The TNase-like domain occupies 48-198 (RTLRGKVVSV…REKRVNIWSL (151 aa)). D77 provides a ligand contact to Ca(2+). Residue R90 is part of the active site. D95 lines the Ca(2+) pocket. Active-site residues include E98 and R138. The N-linked (GlcNAc...) asparagine glycan is linked to N153. The segment at 200–211 (KRETPAQYKARK) is binding to the host cell surface.

In the N-terminal section; belongs to the RxLR effector family. It in the C-terminal section; belongs to the LCL3 family. As to quaternary structure, interacts with the host cell surface endoplasmin gp96, in order to get translocated into to host cell. Interacts with the effector Htp1, in order to get released from vesicles into the host cytosol.

It localises to the secreted. The protein localises to the host cytoplasm. It is found in the host cytosol. Its activity is regulated as follows. The nuclease activity shows a general salt dependency with a clear reduction by magnesium and sulfate ions. Functionally, effector involved in the disease saprolegniosis in salmonids and other freshwater fish, resulting in considerable economic losses in aquaculture. Within the host fish cells, Htp3 is released from vesicles into host cytosol where it degrades nucleic acids. The chain is Endonuclease Htp3 (HTP3) from Saprolegnia parasitica (strain CBS 223.65).